The chain runs to 437 residues: Vacuolar protein sorting-associated protein 4A (437 aa).

Residues 2–80 (TTSTLQKAID…KDYLRNKEKH (79 aa)) enclose the MIT domain. The residue at position 8 (Lys8) is an N6-acetyllysine. Positions 15-37 (KATEEDKAKNYEEALRLYQHAVE) form a coiled coil. The disordered stretch occupies residues 75-106 (RNKEKHGKKPVKENQSEGKGSDSDSEGDNPEK). A compositionally biased stretch (basic and acidic residues) spans 84 to 96 (PVKENQSEGKGSD). Ser95 and Ser97 each carry phosphoserine. Residue 167 to 174 (GPPGTGKS) coordinates ATP.

This sequence belongs to the AAA ATPase family. As to quaternary structure, proposed to be monomeric or homodimeric in nucleotide-free form and to oligomerize upon binding to ATP to form two stacked hexameric or heptameric rings with a central pore through which ESCRT-III substrates are translocated in an ATP-dependent manner. Interacts with CHMP1A, CHMP1B, CHMP2A, CHMP2B, CHMP3, CHMP4A, CHMP4B, CHMP4C and CHMP6. Interacts with VPS4B; the interaction suggests a heteromeric assembly with VPS4B. Interacts with SPAST. Interacts with IST1. Interacts with ZFYVE19/ANCHR; leading to retain it at midbody. Highly expressed in testis and moderately in heart and brain. Not detected in spleen, lung, liver, skeletal muscle or kidney.

Its subcellular location is the late endosome membrane. The protein resides in the midbody. It is found in the cytoplasm. The protein localises to the cytoskeleton. It localises to the spindle. It catalyses the reaction ATP + H2O = ADP + phosphate + H(+). Functionally, involved in late steps of the endosomal multivesicular bodies (MVB) pathway. Recognizes membrane-associated ESCRT-III assemblies and catalyzes their disassembly, possibly in combination with membrane fission. Redistributes the ESCRT-III components to the cytoplasm for further rounds of MVB sorting. MVBs contain intraluminal vesicles (ILVs) that are generated by invagination and scission from the limiting membrane of the endosome and mostly are delivered to lysosomes enabling degradation of membrane proteins, such as stimulated growth factor receptors, lysosomal enzymes and lipids. It is required for proper accomplishment of various processes including the regulation of endosome size, primary cilium organization, mitotic spindle organization and chromosome segregation, and nuclear envelope sealing and spindle disassembly during anaphase. In conjunction with the ESCRT machinery also appears to function in topologically equivalent membrane fission events, such as the terminal stages of cytokinesis. Involved in cytokinesis: retained at the midbody by ZFYVE19/ANCHR and CHMP4C until abscission checkpoint signaling is terminated at late cytokinesis. It is then released following dephosphorylation of CHMP4C, leading to abscission. VPS4A/B are required for the exosomal release of SDCBP, CD63 and syndecan. Critical for normal erythroblast cytokinesis and correct erythropoiesis. The chain is Vacuolar protein sorting-associated protein 4A from Mus musculus (Mouse).